The chain runs to 1343 residues: MVYSYSEKKRIRKDFGKRPKVLDIPYLLSIQLDSFKKFTDQDPTGERGLEAAFRSVFPIKSFSGNSELQYVSYKLGEPVFDVKECQIRGVTYSAPLRVKLRMVLYDREAAAGTVKDIKEQEVYMGDIPLMTDNGTFVINGTERVIVSQLHRSPGVFFDHDRGKTHSSGKVLYNARIIPYRGSWLDFEFDPKDALFVRIDRRRKLPATIMLRALEYSTQEILDLFFERVEFKIKKDTLVMALVPERLRGETASYDIKDAEGSVLVEAGRRITARHIRQLEKTNTTELEVPVEYIVGKYAAQDYIDPDTGEVLVSANSEISLEDLAKLSLAGIKELSTLYINELDHGAYISDTLRIDSTTNRLEALVEIYRMMRPGEPPTKDAAEALFQNLFFSEERYDLSKVGRMKFNRRLSIPDDEGSGVLSKEDIVAVMKNIIHIRNGFDEVDDIDHLGNRRIRSVGEMAENQFRVGLVRVERAVRERLSLGDLNELMPQDLINAKPISAAVKEFFGSSQLSQFMDQNNPLSEVTHKRRISALGPGGLTRERAGFEVRDVHPTHYGRLCPIETPEGPNIGLINSLASFARTNSYGFLETPYRKVIDGVITDEVEYLSAIEEGRYVIAQANIEIDANGRMAEEQIACRHKGESTFMRAADIQYMDVSPQQIISVAASLIPFLEHDDANRALMGANMQRQAVPTLRSEKPLVGTGIERTLAVDSGVVVVAKRGGFVDYVDASRIVVKVNEDELRPGEAGIDIYNLTKYTRSNQNTCINQRPCCSVGEPVVRGDVLADGPSTDLGDLALGQNMRIAFMPWNGYNFEDSILISERVAQEDRFTTIHIQELSCIARDTKLGSEEITADIPNVGESALSKLDESGIVYIGAEVKGGDILVGKVTPKGETQLTPEEKLLRAIFGEKASDVKDSSLRVPNSVKGTIIDVQVFTRDGVEKDKRAVEIEEMHIAQARKDLGEEFKILEEGVLSRARNLLIGAGFTDAQIAALPRKDVLIQVIDDETKQTELEQLAEQHEELKADFDKKFEIKRRKITQGDDLAPGVLKIVKVYLAVKRTIQPGDKMAGRHGNKGVISKICPIEDMPYDEQGNPVDIVLNPLGVPSRMNIGQVLEVHMGAAAKGIGNKITAMLEEQRELAEVRGYIKQVYELGDEVQQRVDIDSFTDDEVLRLATNLKGGIPIATPAFDGAKEKEIKQMLELAGLPTSGQLKLFDGRTGNEFERQVTVGYMYMLKLNHLVDDKMHARSTGSYSLVTQQPLGGKAQFGGQRFGEMEVWALEAYGAAYTLQEMLTVKSDDVNGRTQMYKNIVDGNHQMQPGMPESFNVLLKEIRSLGINIELDQA.

Belongs to the RNA polymerase beta chain family. The RNAP catalytic core consists of 2 alpha, 1 beta, 1 beta' and 1 omega subunit. When a sigma factor is associated with the core the holoenzyme is formed, which can initiate transcription.

It carries out the reaction RNA(n) + a ribonucleoside 5'-triphosphate = RNA(n+1) + diphosphate. Functionally, DNA-dependent RNA polymerase catalyzes the transcription of DNA into RNA using the four ribonucleoside triphosphates as substrates. The polypeptide is DNA-directed RNA polymerase subunit beta (Shewanella baltica (strain OS155 / ATCC BAA-1091)).